Here is an 857-residue protein sequence, read N- to C-terminus: Protein app1 (857 aa).

The region spanning 6–133 is the ADF-H domain; the sequence is DTSTHGAEIR…NMDDIIRRVA (128 aa). Disordered stretches follow at residues 167-562, 585-622, and 693-723; these read AKVA…VPQR, EVPSVPQPPVAPVVPEAPSVPQPPVAPVAPEVPSVPQR, and QLNEPVVPPLPPHDETQEPQVGGDVKATEHT. The segment covering 193 to 204 has biased composition (basic and acidic residues); the sequence is KDSKDNSWDDSS. The span at 205 to 217 shows a compositional bias: low complexity; sequence KQSNTQTANTTSN. A compositionally biased stretch (basic and acidic residues) spans 229–240; it reads AGRKEKSQENKP. Polar residues-rich tracts occupy residues 276–295, 371–385, 399–409, 443–452, and 498–511; these read SISTTTTGSSYRSAESSHAP, PPASTTASKQDSPST, KQVSSNETSAQ, KISSFNSKAG, and SSASQKAAQPSVIT. Over residues 522 to 561 the composition is skewed to low complexity; that stretch reads VVPEAPSVHQPPAAPVAPEVPSAPQRPAAPVVPEAPSVPQ. Composition is skewed to pro residues over residues 587–596 and 602–611; these read PSVPQPPVAP. Over residues 612 to 622 the composition is skewed to low complexity; that stretch reads VAPEVPSVPQR. 2 SH3 domains span residues 725–785 and 800–857; these read PTKT…ITGP and GPGK…VEEI.

In Schizosaccharomyces pombe (strain 972 / ATCC 24843) (Fission yeast), this protein is Protein app1 (app1).